The primary structure comprises 177 residues: MEVCRCHHGYLISLLLFLFHSETACYPLGKRPCEMQAFRIWDVNQKTFYLRNNQLVAGYLQGPNTKLEEKIDVVPIEPHAMFLGIHGGKLCLACVKSGDEIKLGLEPVNITDLNSSKEEDKRFAFIRSDSGPTTSFESAACPGWFLCTALETDQPVGLTNTPQDAVQVTKFYFQQDQ.

The first 25 residues, Met1–Cys25, serve as a signal peptide directing secretion. Cys91 and Cys141 are joined by a disulfide. N-linked (GlcNAc...) asparagine glycans are attached at residues Asn109 and Asn114.

It belongs to the IL-1 family.

It localises to the secreted. Functionally, anti-inflammatory antagonist of interleukin-1 family of proinflammatory cytokines such as interleukin-1beta/IL1B and interleukin-1alpha/IL1A. Protects from immune dysregulation and uncontrolled systemic inflammation triggered by IL1 for a range of innate stimulatory agents such as pathogens. The sequence is that of Interleukin-1 receptor antagonist protein (IL1RN) from Tursiops truncatus (Atlantic bottle-nosed dolphin).